A 137-amino-acid chain; its full sequence is Fluoride-specific ion channel FluC 1 (137 aa).

Helical transmembrane passes span 4–24 (LIYI…YYLG), 37–57 (LATL…TTYI), 67–87 (VITG…TFSV), and 98–118 (WGIA…MSGL). The Na(+) site is built by glycine 77 and threonine 80.

This sequence belongs to the fluoride channel Fluc/FEX (TC 1.A.43) family.

Its subcellular location is the cell membrane. The catalysed reaction is fluoride(in) = fluoride(out). With respect to regulation, na(+) is not transported, but it plays an essential structural role and its presence is essential for fluoride channel function. Its function is as follows. Fluoride-specific ion channel. Important for reducing fluoride concentration in the cell, thus reducing its toxicity. The polypeptide is Fluoride-specific ion channel FluC 1 (Bacillus cereus (strain ZK / E33L)).